The sequence spans 445 residues: UDP-N-acetylmuramoylalanine--D-glutamate ligase (445 aa).

126 to 132 contacts ATP; sequence GTSGKTT.

It belongs to the MurCDEF family.

It is found in the cytoplasm. The enzyme catalyses UDP-N-acetyl-alpha-D-muramoyl-L-alanine + D-glutamate + ATP = UDP-N-acetyl-alpha-D-muramoyl-L-alanyl-D-glutamate + ADP + phosphate + H(+). It functions in the pathway cell wall biogenesis; peptidoglycan biosynthesis. Its function is as follows. Cell wall formation. Catalyzes the addition of glutamate to the nucleotide precursor UDP-N-acetylmuramoyl-L-alanine (UMA). The sequence is that of UDP-N-acetylmuramoylalanine--D-glutamate ligase from Nitratidesulfovibrio vulgaris (strain DSM 19637 / Miyazaki F) (Desulfovibrio vulgaris).